Reading from the N-terminus, the 196-residue chain is Putative 3-methyladenine DNA glycosylase (196 aa).

It belongs to the DNA glycosylase MPG family.

The protein is Putative 3-methyladenine DNA glycosylase of Chlorobium phaeovibrioides (strain DSM 265 / 1930) (Prosthecochloris vibrioformis (strain DSM 265)).